The following is a 229-amino-acid chain: ACD11 homolog protein (229 aa).

Residues glutamate 84, lysine 88, arginine 123, arginine 127, and histidine 166 each coordinate an N-acylsphingoid base 1-phosphate.

Belongs to the GLTP family.

This Arabidopsis thaliana (Mouse-ear cress) protein is ACD11 homolog protein.